Consider the following 295-residue polypeptide: Acetylglutamate kinase (295 aa).

Residues 64–65 (GG), Arg-86, and Asn-190 contribute to the substrate site.

It belongs to the acetylglutamate kinase family. ArgB subfamily.

It localises to the cytoplasm. The enzyme catalyses N-acetyl-L-glutamate + ATP = N-acetyl-L-glutamyl 5-phosphate + ADP. Its pathway is amino-acid biosynthesis; L-arginine biosynthesis; N(2)-acetyl-L-ornithine from L-glutamate: step 2/4. Its function is as follows. Catalyzes the ATP-dependent phosphorylation of N-acetyl-L-glutamate. The protein is Acetylglutamate kinase of Pelotomaculum thermopropionicum (strain DSM 13744 / JCM 10971 / SI).